A 288-amino-acid polypeptide reads, in one-letter code: tRNA (guanine-N(1)-)-methyltransferase (288 aa).

The segment at 82-105 (ATDAVDTSDPGDSAAPDSSAPSGA) is disordered. Low complexity predominate over residues 89–105 (SDPGDSAAPDSSAPSGA). S-adenosyl-L-methionine is bound by residues Gly137 and 162-167 (IGDYVL).

Belongs to the RNA methyltransferase TrmD family. As to quaternary structure, homodimer.

It is found in the cytoplasm. The enzyme catalyses guanosine(37) in tRNA + S-adenosyl-L-methionine = N(1)-methylguanosine(37) in tRNA + S-adenosyl-L-homocysteine + H(+). In terms of biological role, specifically methylates guanosine-37 in various tRNAs. This is tRNA (guanine-N(1)-)-methyltransferase from Bifidobacterium longum (strain DJO10A).